Here is a 132-residue protein sequence, read N- to C-terminus: Interleukin-13 (132 aa).

The first 18 residues, 1–18, serve as a signal peptide directing secretion; sequence MALLLTTVIALTCLGGFA. Residues Asn38, Asn49, Asn57, and Asn72 are each glycosylated (N-linked (GlcNAc...) asparagine). 2 disulfide bridges follow: Cys48–Cys76 and Cys64–Cys90.

Belongs to the IL-4/IL-13 family. In terms of assembly, interacts with IL13RA2.

The protein localises to the secreted. In terms of biological role, cytokine that plays important roles in allergic inflammation and immune response to parasite infection. Synergizes with IL2 in regulating interferon-gamma synthesis. Stimulates B-cell proliferation, and activation of eosinophils, basophils, and mast cells. Plays an important role in controlling IL33 activity by modulating the production of transmembrane and soluble forms of interleukin-1 receptor-like 1/IL1RL1. Displays the capacity to antagonize Th1-driven proinflammatory immune response and downregulates synthesis of many proinflammatory cytokines including IL1, IL6, IL10, IL12 and TNF-alpha through a mechanism that partially involves suppression of NF-kappa-B. Also functions on nonhematopoietic cells, including endothelial cells where it induces vascular cell adhesion protein 1/VCAM1, which is important in the recruitment of eosinophils. Exerts its biological effects through its receptors which comprises the IL4R chain and the IL13RA1 chain, to activate JAK1 and TYK2, leading to the activation of STAT6. Aside from IL13RA1, another receptor IL13RA2 acts as a high affinity decoy for IL13 and mediates internalization and depletion of extracellular IL13. This is Interleukin-13 (IL13) from Pan troglodytes (Chimpanzee).